Reading from the N-terminus, the 143-residue chain is Transcriptional regulator MraZ (143 aa).

SpoVT-AbrB domains lie at T5–E47 and A76–T119.

The protein belongs to the MraZ family. As to quaternary structure, forms oligomers.

Its subcellular location is the cytoplasm. It is found in the nucleoid. The protein is Transcriptional regulator MraZ of Thermobifida fusca (strain YX).